The chain runs to 396 residues: DNA polymerase IV (396 aa).

The UmuC domain maps to 2–182 (ILHVDMDAFY…LPVSRLWGVG (181 aa)). Aspartate 6 and aspartate 100 together coordinate Mg(2+). The active site involves glutamate 101.

Belongs to the DNA polymerase type-Y family. In terms of assembly, monomer. It depends on Mg(2+) as a cofactor.

Its subcellular location is the cytoplasm. It carries out the reaction DNA(n) + a 2'-deoxyribonucleoside 5'-triphosphate = DNA(n+1) + diphosphate. Functionally, poorly processive, error-prone DNA polymerase involved in untargeted mutagenesis. Copies undamaged DNA at stalled replication forks, which arise in vivo from mismatched or misaligned primer ends. These misaligned primers can be extended by PolIV. Exhibits no 3'-5' exonuclease (proofreading) activity. May be involved in translesional synthesis, in conjunction with the beta clamp from PolIII. The sequence is that of DNA polymerase IV from Rhodopirellula baltica (strain DSM 10527 / NCIMB 13988 / SH1).